A 321-amino-acid chain; its full sequence is Glutathione synthetase (321 aa).

One can recognise an ATP-grasp domain in the interval 125–311 (EKLFTGWFPH…IAGQFIAFLE (187 aa)). 151-208 (FIREQKEVVIKPLGAMAGESIFYLTVNDPNIPVVIETMTANGHQLVMAQRFIPEVKSG) serves as a coordination point for ATP. Residues E282 and N284 each contribute to the Mg(2+) site.

Belongs to the prokaryotic GSH synthase family. Requires Mg(2+) as cofactor. Mn(2+) is required as a cofactor.

The catalysed reaction is gamma-L-glutamyl-L-cysteine + glycine + ATP = glutathione + ADP + phosphate + H(+). It participates in sulfur metabolism; glutathione biosynthesis; glutathione from L-cysteine and L-glutamate: step 2/2. The chain is Glutathione synthetase from Coxiella burnetii (strain RSA 493 / Nine Mile phase I).